A 141-amino-acid chain; its full sequence is HTH-type transcriptional repressor NsrR (141 aa).

Residues 2–129 (QLTNFTDYGL…DNYTLADLVE (128 aa)) form the HTH rrf2-type domain. The H-T-H motif DNA-binding region spans 28–51 (ISEVTDVYGVSRNHMVKIINQLSR). [2Fe-2S] cluster is bound by residues cysteine 91, cysteine 96, and cysteine 102.

Requires [2Fe-2S] cluster as cofactor.

In terms of biological role, nitric oxide-sensitive repressor of genes involved in protecting the cell against nitrosative stress. May require iron for activity. The sequence is that of HTH-type transcriptional repressor NsrR from Shigella boydii serotype 18 (strain CDC 3083-94 / BS512).